The primary structure comprises 163 residues: uncharacterized protein (163 aa).

Residues 30–163 (GNENTSVSSD…IYKKLGKKKR (134 aa)) form a disordered region. The span at 88 to 118 (ERQLQKKKEAEKIEGGKNHDNLKRKLNKVGD) shows a compositional bias: basic and acidic residues. Residues 119-133 (ELNEQQSDTDDDDDD) are compositionally biased toward acidic residues. Ser125 bears the Phosphoserine mark. The residue at position 127 (Thr127) is a Phosphothreonine.

Its subcellular location is the nucleus. The protein resides in the nucleolus. This is an uncharacterized protein from Schizosaccharomyces pombe (strain 972 / ATCC 24843) (Fission yeast).